Reading from the N-terminus, the 681-residue chain is MENRTDNEYQLVSPYQPAGDQPKAIEALVQGVRDGRHWQTLLGVTGSGKTFTISNVIAQLNRPVLVMSHNKTLAAQLYGELKQFFPHNAVEYFISYYDFYQPEAYLPSLDKYIAKDLRINDEIERLRLRATSALLSGRKDVIVVSSVSCIYGLGSPEEWKAQIIKLRAGMEKDRDEFLRELISLHYLRDDVQPTSGRFRVRGDTIDLVPAHEELALRIEFFGSEIESLQTFDIQTGEILGDDEYAFIYPARQFVADEEKLQVAMLAIENELAGRLNLLRSENRFVEARRLEERTRYDLEMMKELGYCSGIENYSRHISGRPAGERPICLLDYFPEDYMVVVDESHVTLPQIRGMYGGDRSRKTVLVEHGFRLPSALDNRPLRFEEYEEMVPQVICISATPGEHELMRSGGEVVELLVRPTGLLDPPVEVRPVKGQIDNLLAEIRHHISIGHKALVMTLTKRMSEDLHDFFRKAGIRCRYLHSEIKSLERMQILRELRAGDIDVLVGVNLLREGLDLPEVSLVAILDADKEGFLRNTRSLMQIAGRAARNLDGFVVLYADVITRSIQEVLDETARRRAIQQRYNEEHGITPRSIVKSVDQILDTTGVADAEERYRRRRFGLEPKPERVLSGYADNLTPEKGYAIVEGLRLEMQEAAEHMEYEKAAYLRDEITKMEQVLKKDG.

In terms of domain architecture, Helicase ATP-binding spans 30–419 (QGVRDGRHWQ…GEVVELLVRP (390 aa)). 43-50 (GVTGSGKT) lines the ATP pocket. The short motif at 96–119 (YYDFYQPEAYLPSLDKYIAKDLRI) is the Beta-hairpin element. Residues 435 to 601 (QIDNLLAEIR…SIVKSVDQIL (167 aa)) form the Helicase C-terminal domain. The UVR domain occupies 641 to 676 (YAIVEGLRLEMQEAAEHMEYEKAAYLRDEITKMEQV).

This sequence belongs to the UvrB family. As to quaternary structure, forms a heterotetramer with UvrA during the search for lesions. Interacts with UvrC in an incision complex.

It is found in the cytoplasm. Functionally, the UvrABC repair system catalyzes the recognition and processing of DNA lesions. A damage recognition complex composed of 2 UvrA and 2 UvrB subunits scans DNA for abnormalities. Upon binding of the UvrA(2)B(2) complex to a putative damaged site, the DNA wraps around one UvrB monomer. DNA wrap is dependent on ATP binding by UvrB and probably causes local melting of the DNA helix, facilitating insertion of UvrB beta-hairpin between the DNA strands. Then UvrB probes one DNA strand for the presence of a lesion. If a lesion is found the UvrA subunits dissociate and the UvrB-DNA preincision complex is formed. This complex is subsequently bound by UvrC and the second UvrB is released. If no lesion is found, the DNA wraps around the other UvrB subunit that will check the other stand for damage. The chain is UvrABC system protein B from Chlorobium chlorochromatii (strain CaD3).